We begin with the raw amino-acid sequence, 503 residues long: Long-chain-aldehyde dehydrogenase (503 aa).

Glycine 218–glycine 224 lines the NAD(+) pocket. Residues glutamate 262 and cysteine 301 contribute to the active site.

It belongs to the aldehyde dehydrogenase family. As to quaternary structure, homotetramer.

It carries out the reaction a long-chain fatty aldehyde + NAD(+) + H2O = a long-chain fatty acid + NADH + 2 H(+). Completely inhibited by p-chloromercuribenzoate and N-ethylmaleimide. Strongly inhibited by iodoacetate. Inhibited by Pb(2+), Fe(3+), Ag(+) and Hg(2+) and partially inhibited by several other metal ions Mn(2+), Zn(2+) and Cu(2+). In terms of biological role, aldehyde dehydrogenase that shows activity toward n-alkanals (C(4) to C(14)), with a preference for longer carbon chains. The best substrate is tetradecanal. This Acinetobacter sp protein is Long-chain-aldehyde dehydrogenase (ald1).